Consider the following 218-residue polypeptide: Cytochrome b6 (218 aa).

The chain crosses the membrane as a helical span at residues Ile-35–Phe-55. Residue Cys-38 coordinates heme c. Heme b is bound by residues His-89 and His-103. A run of 3 helical transmembrane segments spans residues Ala-93–Phe-113, Leu-119–Tyr-139, and Leu-189–Ile-209. 2 residues coordinate heme b: His-190 and His-205.

The protein belongs to the cytochrome b family. PetB subfamily. As to quaternary structure, the 4 large subunits of the cytochrome b6-f complex are cytochrome b6, subunit IV (17 kDa polypeptide, PetD), cytochrome f and the Rieske protein, while the 4 small subunits are PetG, PetL, PetM and PetN. The complex functions as a dimer. The cofactor is heme b. Heme c serves as cofactor.

Its subcellular location is the cellular thylakoid membrane. Component of the cytochrome b6-f complex, which mediates electron transfer between photosystem II (PSII) and photosystem I (PSI), cyclic electron flow around PSI, and state transitions. The polypeptide is Cytochrome b6 (Prochlorococcus marinus subsp. pastoris (strain CCMP1986 / NIES-2087 / MED4)).